We begin with the raw amino-acid sequence, 440 residues long: MTAIADSAGGAGETVLVAGGQDWQQVVDAARSADPGERIVVNMGPQHPSTHGVLRLILEIEGETVVEARCGIGYLHTGIEKNLEYRYWTQGVTFVTRMDYLSPFFNETAYCLGVEKLLGITDEIPERVNVIRVLMMELNRISSHLVALATGGMELGAMTPMFVGFRAREIVLTLFEKITGLRMNSAYIRPGGVAQDLPPNAATEIAEALKQLRQPLREMGELLNENAIWKARTQGVGYLDLTGCMALGITGPILRSTGLPHDLRKSEPYCGYQHYEFDVITDDSCDAYGRYMIRVKEMWESMKIVEQCLDKLRPGPTMISDRKLAWPADLQVGPDGLGNSPKHIAKIMGSSMEALIHHFKLVTEGIRVPAGQVYVAVESPRGELGVHMVSDGGTRPYRVHYRDPSFTNLQSVAAMCEGGMVADLIAAVASIDPVMGGVDR.

It belongs to the complex I 49 kDa subunit family. As to quaternary structure, NDH-1 is composed of 14 different subunits. Subunits NuoB, C, D, E, F, and G constitute the peripheral sector of the complex.

It localises to the cell membrane. The enzyme catalyses a quinone + NADH + 5 H(+)(in) = a quinol + NAD(+) + 4 H(+)(out). In terms of biological role, NDH-1 shuttles electrons from NADH, via FMN and iron-sulfur (Fe-S) centers, to quinones in the respiratory chain. The immediate electron acceptor for the enzyme in this species is believed to be a menaquinone. Couples the redox reaction to proton translocation (for every two electrons transferred, four hydrogen ions are translocated across the cytoplasmic membrane), and thus conserves the redox energy in a proton gradient. This chain is NADH-quinone oxidoreductase subunit D, found in Mycobacterium bovis (strain ATCC BAA-935 / AF2122/97).